The sequence spans 94 residues: uncharacterized protein (94 aa).

A signal peptide spans 1–19 (MKFSGLILGALALVSGAIA).

This sequence belongs to the protease inhibitor I9 family.

This is an uncharacterized protein from Neurospora crassa (strain ATCC 24698 / 74-OR23-1A / CBS 708.71 / DSM 1257 / FGSC 987).